The sequence spans 379 residues: L-lactate dehydrogenase (379 aa).

In terms of domain architecture, FMN hydroxy acid dehydrogenase spans 1–379 (MIISSSTDYR…ITSELLVREP (379 aa)). Substrate is bound at residue Tyr-24. Positions 106 and 127 each coordinate FMN. Tyr-129 contributes to the substrate binding site. Thr-155 contributes to the FMN binding site. A substrate-binding site is contributed by Arg-164. Residue Lys-251 coordinates FMN. His-275 (proton acceptor) is an active-site residue. Position 278 (Arg-278) interacts with substrate. 306-330 (DSGIRSGLDVVRMIALGADAAMLGR) lines the FMN pocket.

Belongs to the FMN-dependent alpha-hydroxy acid dehydrogenase family. It depends on FMN as a cofactor.

Its subcellular location is the cell membrane. The enzyme catalyses (S)-lactate + A = pyruvate + AH2. Its function is as follows. Catalyzes the conversion of L-lactate to pyruvate. Is coupled to the respiratory chain. The sequence is that of L-lactate dehydrogenase from Alcaligenes faecalis.